The chain runs to 576 residues: Dihydroxy-acid dehydratase (576 aa).

[2Fe-2S] cluster is bound at residue C56. D88 provides a ligand contact to Mg(2+). Residue C129 coordinates [2Fe-2S] cluster. Residues D130 and K131 each coordinate Mg(2+). N6-carboxylysine is present on K131. Residue C201 participates in [2Fe-2S] cluster binding. Position 453 (E453) interacts with Mg(2+). Residue S479 is the Proton acceptor of the active site.

It belongs to the IlvD/Edd family. As to quaternary structure, homodimer. [2Fe-2S] cluster is required as a cofactor. Mg(2+) serves as cofactor.

The enzyme catalyses (2R)-2,3-dihydroxy-3-methylbutanoate = 3-methyl-2-oxobutanoate + H2O. It carries out the reaction (2R,3R)-2,3-dihydroxy-3-methylpentanoate = (S)-3-methyl-2-oxopentanoate + H2O. Its pathway is amino-acid biosynthesis; L-isoleucine biosynthesis; L-isoleucine from 2-oxobutanoate: step 3/4. The protein operates within amino-acid biosynthesis; L-valine biosynthesis; L-valine from pyruvate: step 3/4. In terms of biological role, functions in the biosynthesis of branched-chain amino acids. Catalyzes the dehydration of (2R,3R)-2,3-dihydroxy-3-methylpentanoate (2,3-dihydroxy-3-methylvalerate) into 2-oxo-3-methylpentanoate (2-oxo-3-methylvalerate) and of (2R)-2,3-dihydroxy-3-methylbutanoate (2,3-dihydroxyisovalerate) into 2-oxo-3-methylbutanoate (2-oxoisovalerate), the penultimate precursor to L-isoleucine and L-valine, respectively. In Parvibaculum lavamentivorans (strain DS-1 / DSM 13023 / NCIMB 13966), this protein is Dihydroxy-acid dehydratase.